The following is a 358-amino-acid chain: Chorismate synthase (358 aa).

NADP(+) is bound at residue Arg47. FMN contacts are provided by residues 124–126 (RSS), 240–241 (NA), Gly284, 299–303 (KPVAT), and Arg325.

It belongs to the chorismate synthase family. Homotetramer. FMNH2 is required as a cofactor.

It carries out the reaction 5-O-(1-carboxyvinyl)-3-phosphoshikimate = chorismate + phosphate. It functions in the pathway metabolic intermediate biosynthesis; chorismate biosynthesis; chorismate from D-erythrose 4-phosphate and phosphoenolpyruvate: step 7/7. In terms of biological role, catalyzes the anti-1,4-elimination of the C-3 phosphate and the C-6 proR hydrogen from 5-enolpyruvylshikimate-3-phosphate (EPSP) to yield chorismate, which is the branch point compound that serves as the starting substrate for the three terminal pathways of aromatic amino acid biosynthesis. This reaction introduces a second double bond into the aromatic ring system. The chain is Chorismate synthase from Bacteroides fragilis (strain YCH46).